The sequence spans 343 residues: Transcription factor MYB11 (343 aa).

2 consecutive HTH myb-type domains span residues 9-61 (KVGI…INYL) and 62-116 (RSDI…SRKL). DNA-binding regions (H-T-H motif) lie at residues 37–61 (WRSL…INYL) and 89–112 (WSTI…NSHL). Residues 126 to 146 (ANTVENAPPPPKRRPGRTSRS) are disordered.

Expressed in seedlings, roots, cotyledons, leaves and apical meristems.

Its subcellular location is the nucleus. Functionally, modulates overall growth by reducing the proliferation activity of meristematic cells and delaying development. Flavonol-specific transcription activator involved in the regulation of several genes of flavonoid biosynthesis. Activates the expression of CHS, CHI, F3H and FLS1. Confers tolerance to UV-B. The sequence is that of Transcription factor MYB11 from Arabidopsis thaliana (Mouse-ear cress).